A 513-amino-acid polypeptide reads, in one-letter code: Varicidin biosynthesis cluster-specific transcription factor (513 aa).

Positions 16–54 form a DNA-binding region, zn(2)-C6 fungal-type; it reads CERCRLHKLKCTILPQKRFEGPQEAPEQCTRCARAKAKC. Disordered stretches follow at residues 58–92 and 97–116; these read RRAP…MQPN and VSSH…SSLK. Over residues 67 to 76 the composition is skewed to low complexity; sequence SSSNDRSSVS. Residues 77–92 show a composition bias toward polar residues; it reads KGINSTTPATRTMQPN.

It is found in the nucleus. Transcription factor that regulates the expression of the gene cluster that mediates the biosynthesis of varicidin A, an antifungal natural product containing a cis-octahydrodecalin core. The sequence is that of Varicidin biosynthesis cluster-specific transcription factor from Talaromyces variabilis (Penicillium variabile).